Here is a 100-residue protein sequence, read N- to C-terminus: Integration host factor subunit alpha (100 aa).

Positions Asp54 to Pro73 are disordered.

It belongs to the bacterial histone-like protein family. In terms of assembly, heterodimer of an alpha and a beta chain.

Functionally, this protein is one of the two subunits of integration host factor, a specific DNA-binding protein that functions in genetic recombination as well as in transcriptional and translational control. The protein is Integration host factor subunit alpha of Pseudomonas aeruginosa (strain UCBPP-PA14).